A 207-amino-acid chain; its full sequence is Large ribosomal subunit protein uL4 (207 aa).

Positions 56–76 (EVRGGGRKPWRQKGTGRARAG) are disordered. Residues 60–71 (GGRKPWRQKGTG) show a composition bias toward basic residues.

Belongs to the universal ribosomal protein uL4 family. As to quaternary structure, part of the 50S ribosomal subunit.

One of the primary rRNA binding proteins, this protein initially binds near the 5'-end of the 23S rRNA. It is important during the early stages of 50S assembly. It makes multiple contacts with different domains of the 23S rRNA in the assembled 50S subunit and ribosome. In terms of biological role, forms part of the polypeptide exit tunnel. The sequence is that of Large ribosomal subunit protein uL4 from Desulfitobacterium hafniense (strain DSM 10664 / DCB-2).